The following is a 299-amino-acid chain: Acetylglutamate kinase (299 aa).

Residues 70–71, arginine 92, and asparagine 197 each bind substrate; that span reads GG.

This sequence belongs to the acetylglutamate kinase family. ArgB subfamily.

It localises to the cytoplasm. The catalysed reaction is N-acetyl-L-glutamate + ATP = N-acetyl-L-glutamyl 5-phosphate + ADP. The protein operates within amino-acid biosynthesis; L-arginine biosynthesis; N(2)-acetyl-L-ornithine from L-glutamate: step 2/4. In terms of biological role, catalyzes the ATP-dependent phosphorylation of N-acetyl-L-glutamate. In Acidiphilium cryptum (strain JF-5), this protein is Acetylglutamate kinase.